Reading from the N-terminus, the 131-residue chain is Sperm microtubule inner protein 11 (131 aa).

The disordered stretch occupies residues 17 to 44 (SKKRDKTEETNQKDPVPTRLPPIFSEDG).

As to quaternary structure, microtubule inner protein component of sperm flagellar doublet microtubules. In terms of tissue distribution, expressed in sperm.

It is found in the cytoplasm. The protein localises to the cytoskeleton. It localises to the flagellum axoneme. Its function is as follows. Microtubule inner protein (MIP) part of the dynein-decorated doublet microtubules (DMTs) in flagellum axoneme. May serve to reinforce and thus stabilize the microtubule structure in the sperm flagella. This is Sperm microtubule inner protein 11 (SPMIP11) from Bos taurus (Bovine).